Here is a 685-residue protein sequence, read N- to C-terminus: Pentatricopeptide repeat-containing protein At5g19020, mitochondrial (685 aa).

The N-terminal 23 residues, 1-23, are a transit peptide targeting the mitochondrion; the sequence is MIKLIRFFRSRRCWVISLQARCF. 17 PPR repeats span residues 40 to 74, 75 to 105, 106 to 136, 137 to 171, 172 to 206, 207 to 237, 238 to 268, 269 to 303, 304 to 338, 339 to 369, 370 to 400, 401 to 435, 437 to 471, 472 to 502, 506 to 540, 541 to 576, and 577 to 607; these read TERA…GLDS, NGYI…HAKL, DSAS…MPER, SCVS…GIML, NEVT…KLEG, RVFV…MPER, NLVT…ITEK, DIVS…GMKP, SEVM…GFDC, YDFL…SVKD, HIAS…THDK, DIFS…SQVK, DAIT…TIPP, NDNL…TKNI, TISP…PIKP, NSIT…GIEP, and DIKH…MPVK. The tract at residues 612–685 is type E motif; degenerate; the sequence is IWGMLLSASR…EWSRAFSGVV (74 aa).

The protein belongs to the PPR family. PCMP-E subfamily.

The protein resides in the mitochondrion. The protein is Pentatricopeptide repeat-containing protein At5g19020, mitochondrial (PCMP-E42) of Arabidopsis thaliana (Mouse-ear cress).